We begin with the raw amino-acid sequence, 250 residues long: 2,3-bisphosphoglycerate-dependent phosphoglycerate mutase (250 aa).

Substrate is bound by residues 10 to 17 (RHGESQWN), 23 to 24 (TG), Arg62, 89 to 92 (ERHY), Lys100, 116 to 117 (RR), and 185 to 186 (GN). His11 serves as the catalytic Tele-phosphohistidine intermediate. Glu89 serves as the catalytic Proton donor/acceptor.

Belongs to the phosphoglycerate mutase family. BPG-dependent PGAM subfamily. Homodimer.

The enzyme catalyses (2R)-2-phosphoglycerate = (2R)-3-phosphoglycerate. The protein operates within carbohydrate degradation; glycolysis; pyruvate from D-glyceraldehyde 3-phosphate: step 3/5. Catalyzes the interconversion of 2-phosphoglycerate and 3-phosphoglycerate. The chain is 2,3-bisphosphoglycerate-dependent phosphoglycerate mutase from Salmonella paratyphi A (strain ATCC 9150 / SARB42).